A 552-amino-acid polypeptide reads, in one-letter code: Chaperonin GroEL 1 (552 aa).

ATP-binding positions include 30 to 33, K51, 87 to 91, G415, 479 to 481, and D495; these read TLGP, DGTTT, and NAA.

The protein belongs to the chaperonin (HSP60) family. Forms a cylinder of 14 subunits composed of two heptameric rings stacked back-to-back. Interacts with the co-chaperonin GroES.

The protein localises to the cytoplasm. The catalysed reaction is ATP + H2O + a folded polypeptide = ADP + phosphate + an unfolded polypeptide.. Functionally, together with its co-chaperonin GroES, plays an essential role in assisting protein folding. The GroEL-GroES system forms a nano-cage that allows encapsulation of the non-native substrate proteins and provides a physical environment optimized to promote and accelerate protein folding. This Albidiferax ferrireducens (strain ATCC BAA-621 / DSM 15236 / T118) (Rhodoferax ferrireducens) protein is Chaperonin GroEL 1.